Consider the following 153-residue polypeptide: Large ribosomal subunit protein uL15 (153 aa).

A disordered region spans residues 21-41 (RGIGSGKGKTGGRGIKGQKSR). The segment covering 23 to 35 (IGSGKGKTGGRGI) has biased composition (gly residues).

The protein belongs to the universal ribosomal protein uL15 family. Part of the 50S ribosomal subunit.

Functionally, binds to the 23S rRNA. This is Large ribosomal subunit protein uL15 from Rickettsia africae (strain ESF-5).